Consider the following 254-residue polypeptide: Polysaccharide deacetylase domain-containing protein ECU11_0510 (254 aa).

A NodB homology domain is found at 26–210; it reads GMIAINFVDG…IGKDKGYRFV (185 aa).

The polypeptide is Polysaccharide deacetylase domain-containing protein ECU11_0510 (Encephalitozoon cuniculi (strain GB-M1) (Microsporidian parasite)).